A 1040-amino-acid chain; its full sequence is Multidrug resistance protein MdtB (1040 aa).

12 helical membrane passes run 25–45 (LLMAAILLAGIIGYRFLPVAA), 347–367 (LMLAIALVVMIIYLFLRNIPA), 369–389 (IIPGVAVPLSLIGTFAVMVFL), 396–416 (LTLMALTIATGFVVDDAIVVI), 440–460 (IGFTIISLTFSLIAVLIPLLF), 472–492 (FAVTLAVAILISAVVSLTLTP), 537–557 (WLTLSVAFATLLLSIMLWIVI), 863–883 (LGSTVWLIVAAVVAMYIVLGV), 888–908 (FIHPITILSTLPTAGVGALLA), 910–930 (IIAGSELDIIAIIGIILLIGI), 968–988 (ILMTTLAALLGALPLMLSTGV), and 998–1018 (IAMVGGLLVSQVLTLFTTPVI).

This sequence belongs to the resistance-nodulation-cell division (RND) (TC 2.A.6) family. MdtB subfamily. As to quaternary structure, part of a tripartite efflux system composed of MdtA, MdtB and MdtC. MdtB forms a heteromultimer with MdtC.

It localises to the cell inner membrane. In Salmonella newport (strain SL254), this protein is Multidrug resistance protein MdtB.